A 425-amino-acid chain; its full sequence is MSISNQLFDRAQAIIPGGVNSPARAFNGVGGDPLFIEKAQGAYIYDVDKKSYIDYVGSWGPMILGHNHPEIKAAVIAAVENGLSFGAPTEIEIIMAEKVKSLVPSMEQVRMVSSGTEATMSAIRLARGYTGRDKILKFEGNYHGHSDSLLVKAGSGALTLGQPSSPGIPADFAKHTLTATYNDLASVQQLFTEYKDQIACIIVEPVAGNMNCILPQEGFLQGLREICDANDALLILDEVMTGFRVALGGAQAYYDIKPDLTTLGKVIGGGMPVGAFGGSKKVMQHIAPTGPVYQAGTLSGNPIAMHAGLAALTALDRPEYAQLAEKTKKLALGLKRVAKEENVPLAINYAGGMFGFFFTEAEQVSNYTQACACDIEKFKKFFHLMLEQGIYLAPSAFEAGFLSLAHSDQDIEDTLTAAKKAFSML.

Lys-265 carries the N6-(pyridoxal phosphate)lysine modification.

The protein belongs to the class-III pyridoxal-phosphate-dependent aminotransferase family. HemL subfamily. In terms of assembly, homodimer. It depends on pyridoxal 5'-phosphate as a cofactor.

The protein localises to the cytoplasm. The catalysed reaction is (S)-4-amino-5-oxopentanoate = 5-aminolevulinate. It functions in the pathway porphyrin-containing compound metabolism; protoporphyrin-IX biosynthesis; 5-aminolevulinate from L-glutamyl-tRNA(Glu): step 2/2. The protein is Glutamate-1-semialdehyde 2,1-aminomutase of Psychromonas ingrahamii (strain DSM 17664 / CCUG 51855 / 37).